Consider the following 665-residue polypeptide: Fructose-1,6-bisphosphatase class 3 (665 aa).

The protein belongs to the FBPase class 3 family. Mn(2+) is required as a cofactor.

It carries out the reaction beta-D-fructose 1,6-bisphosphate + H2O = beta-D-fructose 6-phosphate + phosphate. The protein operates within carbohydrate biosynthesis; gluconeogenesis. This is Fructose-1,6-bisphosphatase class 3 from Alkaliphilus metalliredigens (strain QYMF).